Here is a 317-residue protein sequence, read N- to C-terminus: Glucose-6-phosphate isomerase, cytosolic 2B (317 aa).

Glutamate 108 (proton donor) is an active-site residue. Active-site residues include histidine 139 and lysine 264.

It belongs to the GPI family. Homodimer.

Its subcellular location is the cytoplasm. The enzyme catalyses alpha-D-glucose 6-phosphate = beta-D-fructose 6-phosphate. It participates in carbohydrate degradation; glycolysis; D-glyceraldehyde 3-phosphate and glycerone phosphate from D-glucose: step 2/4. The protein is Glucose-6-phosphate isomerase, cytosolic 2B (PGIC2-B) of Clarkia lewisii (Farewell-to-spring).